Reading from the N-terminus, the 492-residue chain is Peptidyl-prolyl cis-trans isomerase-like 4 (492 aa).

The region spanning 1–161 is the PPIase cyclophilin-type domain; it reads MAVLLETTLG…QDIRINHTVI (161 aa). The interval 167-188 is disordered; the sequence is DDPPDLLIPDRSPEPTKEQLDS. The span at 177-187 shows a compositional bias: basic and acidic residues; that stretch reads RSPEPTKEQLD. Position 178 is a phosphoserine (S178). T182 is subject to Phosphothreonine. Glycyl lysine isopeptide (Lys-Gly) (interchain with G-Cter in SUMO2) cross-links involve residues K201, K212, and K218. One can recognise an RRM domain in the interval 240 to 318; it reads NVLFVCKLNP…RRIHVDFSQS (79 aa). Glycyl lysine isopeptide (Lys-Gly) (interchain with G-Cter in SUMO2) cross-links involve residues K321 and K362. Disordered regions lie at residues 368 to 409 and 423 to 492; these read DEQG…NPNQ and EESC…SKYR. Positions 377–390 are enriched in basic residues; that stretch reads SHSHTSKKHKKKTR. A Phosphoserine modification is found at S393. K405 participates in a covalent cross-link: Glycyl lysine isopeptide (Lys-Gly) (interchain with G-Cter in SUMO2). Positions 426 to 436 are enriched in basic and acidic residues; the sequence is CWEKQKNEKRD. K460 participates in a covalent cross-link: Glycyl lysine isopeptide (Lys-Gly) (interchain with G-Cter in SUMO2). Phosphoserine is present on S471. The segment covering 473–485 has biased composition (basic residues); that stretch reads KRDRSRSPKKSKA.

Belongs to the cyclophilin-type PPIase family. PPIL4 subfamily.

Its subcellular location is the nucleus. The catalysed reaction is [protein]-peptidylproline (omega=180) = [protein]-peptidylproline (omega=0). Its function is as follows. PPIases accelerate the folding of proteins. It catalyzes the cis-trans isomerization of proline imidic peptide bonds in oligopeptides. The chain is Peptidyl-prolyl cis-trans isomerase-like 4 (Ppil4) from Mus musculus (Mouse).